Reading from the N-terminus, the 250-residue chain is Small ribosomal subunit protein uS2 (250 aa).

The protein belongs to the universal ribosomal protein uS2 family.

This is Small ribosomal subunit protein uS2 from Chloroherpeton thalassium (strain ATCC 35110 / GB-78).